The chain runs to 283 residues: Putative S-adenosyl-L-methionine-dependent methyltransferase SAV_474/SAV474 (283 aa).

Residues aspartate 121 and 150-151 (DL) each bind S-adenosyl-L-methionine. A disordered region spans residues 258-283 (AAYGRPISTPPQREERPGGLISAVRR).

It belongs to the UPF0677 family.

Functionally, exhibits S-adenosyl-L-methionine-dependent methyltransferase activity. The polypeptide is Putative S-adenosyl-L-methionine-dependent methyltransferase SAV_474/SAV474 (Streptomyces avermitilis (strain ATCC 31267 / DSM 46492 / JCM 5070 / NBRC 14893 / NCIMB 12804 / NRRL 8165 / MA-4680)).